The following is a 430-amino-acid chain: Enolase (430 aa).

Q167 contributes to the (2R)-2-phosphoglycerate binding site. Catalysis depends on E209, which acts as the Proton donor. Mg(2+) is bound by residues D246, E287, and D314. Residues K339, R368, and S369 each contribute to the (2R)-2-phosphoglycerate site. K339 (proton acceptor) is an active-site residue.

Belongs to the enolase family. Requires Mg(2+) as cofactor.

It is found in the cytoplasm. It localises to the secreted. The protein resides in the cell surface. The enzyme catalyses (2R)-2-phosphoglycerate = phosphoenolpyruvate + H2O. The protein operates within carbohydrate degradation; glycolysis; pyruvate from D-glyceraldehyde 3-phosphate: step 4/5. In terms of biological role, catalyzes the reversible conversion of 2-phosphoglycerate (2-PG) into phosphoenolpyruvate (PEP). It is essential for the degradation of carbohydrates via glycolysis. This Synechococcus sp. (strain ATCC 27144 / PCC 6301 / SAUG 1402/1) (Anacystis nidulans) protein is Enolase.